We begin with the raw amino-acid sequence, 304 residues long: MSRIAYFGPVGTFTEQAARTFMAAGDELVAAETIPKALDAVRRGEADAACVPVENSVEGAVPATLDSLAVGEPLIGVAEALLPVHFSVLTRDDVGEIRTVASHPHALAQVRKWLEDNLPGARVVAAGSTAAAAVAVQAGEFDAAVTAPVAVEHYPLKVLATEVADVRDARTRFLLMRRPPVVLPEPTGADRTSIVAAAANRTGTLAELLTELATRGINLTRLDARPHKQNFGEYRFFIDFEGHVAEPRIADALAALRRRCRDVRFLGSFARADGVAATIEPAARNEDFTDAADWVAAVQRGEQA.

The Prephenate dehydratase domain occupies 3-178; it reads RIAYFGPVGT…ARTRFLLMRR (176 aa). One can recognise an ACT domain in the interval 193-271; that stretch reads SIVAAAANRT…DVRFLGSFAR (79 aa).

The enzyme catalyses prephenate + H(+) = 3-phenylpyruvate + CO2 + H2O. It participates in amino-acid biosynthesis; L-phenylalanine biosynthesis; phenylpyruvate from prephenate: step 1/1. This Amycolatopsis methanolica protein is Prephenate dehydratase (pheA).